Reading from the N-terminus, the 298-residue chain is Pyridoxal 5'-phosphate synthase subunit PdxS (298 aa).

Residue Asp-24 participates in D-ribose 5-phosphate binding. Lys-81 serves as the catalytic Schiff-base intermediate with D-ribose 5-phosphate. Gly-153 provides a ligand contact to D-ribose 5-phosphate. Arg-165 contacts D-glyceraldehyde 3-phosphate. D-ribose 5-phosphate contacts are provided by residues Gly-214 and 235–236; that span reads GS.

The protein belongs to the PdxS/SNZ family. In terms of assembly, in the presence of PdxT, forms a dodecamer of heterodimers.

The enzyme catalyses aldehydo-D-ribose 5-phosphate + D-glyceraldehyde 3-phosphate + L-glutamine = pyridoxal 5'-phosphate + L-glutamate + phosphate + 3 H2O + H(+). The protein operates within cofactor biosynthesis; pyridoxal 5'-phosphate biosynthesis. Its function is as follows. Catalyzes the formation of pyridoxal 5'-phosphate from ribose 5-phosphate (RBP), glyceraldehyde 3-phosphate (G3P) and ammonia. The ammonia is provided by the PdxT subunit. Can also use ribulose 5-phosphate and dihydroxyacetone phosphate as substrates, resulting from enzyme-catalyzed isomerization of RBP and G3P, respectively. This is Pyridoxal 5'-phosphate synthase subunit PdxS from Halalkalibacterium halodurans (strain ATCC BAA-125 / DSM 18197 / FERM 7344 / JCM 9153 / C-125) (Bacillus halodurans).